A 177-amino-acid chain; its full sequence is Iron-sulfur cluster assembly protein SufA (177 aa).

An N-terminal signal peptide occupies residues 1–18; sequence MTIHIFLCFLLILKIVNA. [4Fe-4S] cluster contacts are provided by cysteine 101, cysteine 169, and cysteine 171.

It belongs to the HesB/IscA family. Homodimer. Homotetramer formation is observed in vitro.

It localises to the plastid. The protein localises to the apicoplast. Its pathway is cofactor biosynthesis; iron-sulfur cluster biosynthesis. Its function is as follows. Participates in the sulfur mobilization (SUF) pathway for iron-sulfur (Fe-S) cluster biogenesis. Involved in the pre-assembly of [4Fe-4S] clusters and their transfer to target proteins. The polypeptide is Iron-sulfur cluster assembly protein SufA (Plasmodium falciparum (isolate 3D7)).